We begin with the raw amino-acid sequence, 344 residues long: Transcription factor HRS1 (344 aa).

The segment at 88-184 (IKDSSTSNEE…DGGGGRKQRR (97 aa)) is disordered. The span at 95–104 (NEEEDEEFDD) shows a compositional bias: acidic residues. Composition is skewed to basic and acidic residues over residues 105-124 (EHGN…KSDW) and 138-178 (LLPK…DGGG). The HTH myb-type domain occupies 178-238 (GGRKQRRCWS…HLQKYRLHTR (61 aa)). Residues 209–234 (PKQIREFMKVDGLTNDEVKSHLQKYR) constitute a DNA-binding region (H-T-H motif). Positions 269 to 291 (STGKTTGGATTSSTTTTTGIYGT) are enriched in low complexity. Residues 269 to 322 (STGKTTGGATTSSTTTTTGIYGTMAAPPPPQWPSHSNYRPSIIVDEGSGSHSEG) are disordered.

In terms of tissue distribution, expressed in the root hair region and root hair cells.

It localises to the nucleus. Transcription factor involved in nitrate and phosphate signaling in roots. Integrates nitrate and phosphate starvation responses and adaptation of root architecture depending on nutrient availabilities. Acts downstream of the nitrate sensor and transporter NPF6.3/NRT1.1. Represses primary root development in response to phosphate deficiency conditions, only when nitrate is present. Involved in the modulation of primary root and root hair growth in phosphate-deprived environment. May be required for suppressing abscisic acid (ABA) signaling in germinating embryo axis, which promotes the timely germination of seeds. In Arabidopsis thaliana (Mouse-ear cress), this protein is Transcription factor HRS1.